The sequence spans 103 residues: MYAVVKTGGKQYRVAVGEKLKVEQIPADIDSQIVLEEVLMVAGGDEVKVGTPLVAGATVKATVVSHGRGEKVRIFKMRRRKHYQKHQGHRQNYTEIRIDEISL.

Belongs to the bacterial ribosomal protein bL21 family. In terms of assembly, part of the 50S ribosomal subunit. Contacts protein L20.

In terms of biological role, this protein binds to 23S rRNA in the presence of protein L20. In Laribacter hongkongensis (strain HLHK9), this protein is Large ribosomal subunit protein bL21.